The following is a 458-amino-acid chain: tRNA-2-methylthio-N(6)-dimethylallyladenosine synthase (458 aa).

One can recognise an MTTase N-terminal domain in the interval 15–134 (KKVFIKTYGC…LPDLLEQTKQ (120 aa)). [4Fe-4S] cluster is bound by residues cysteine 24, cysteine 60, cysteine 97, cysteine 175, cysteine 179, and cysteine 182. Positions 161–393 (RKRGVSAFLT…QVLLLEQQNA (233 aa)) constitute a Radical SAM core domain. The 62-residue stretch at 396–457 (RSKIGQTTDV…SNSFVGEIAN (62 aa)) folds into the TRAM domain.

The protein belongs to the methylthiotransferase family. MiaB subfamily. As to quaternary structure, monomer. Requires [4Fe-4S] cluster as cofactor.

It localises to the cytoplasm. It carries out the reaction N(6)-dimethylallyladenosine(37) in tRNA + (sulfur carrier)-SH + AH2 + 2 S-adenosyl-L-methionine = 2-methylsulfanyl-N(6)-dimethylallyladenosine(37) in tRNA + (sulfur carrier)-H + 5'-deoxyadenosine + L-methionine + A + S-adenosyl-L-homocysteine + 2 H(+). Its function is as follows. Catalyzes the methylthiolation of N6-(dimethylallyl)adenosine (i(6)A), leading to the formation of 2-methylthio-N6-(dimethylallyl)adenosine (ms(2)i(6)A) at position 37 in tRNAs that read codons beginning with uridine. The chain is tRNA-2-methylthio-N(6)-dimethylallyladenosine synthase from Bartonella quintana (strain Toulouse) (Rochalimaea quintana).